The following is a 1096-amino-acid chain: Carbamoyl phosphate synthase large chain (1096 aa).

Residues 1-402 (MPKRDDINSV…ALQKALRSLE (402 aa)) are carboxyphosphate synthetic domain. Arg-129, Arg-169, Gly-175, Gly-176, Glu-208, Ile-210, Glu-215, Gly-241, Val-242, His-243, Gln-285, and Glu-299 together coordinate ATP. The ATP-grasp 1 domain occupies 133 to 328 (KDLVIESGAD…IAKIAAKLAI (196 aa)). Positions 285, 299, and 301 each coordinate Mg(2+). Mn(2+) is bound by residues Gln-285, Glu-299, and Asn-301. Residues 403–547 (KRGSSFHWGP…YSSYDSETEI (145 aa)) are oligomerization domain. The segment at 548–950 (VPSDRRKVII…AFAKSQEAAF (403 aa)) is carbamoyl phosphate synthetic domain. The ATP-grasp 2 domain occupies 676–870 (SGILDTAGLV…LAKAASLVMV (195 aa)). Positions 712, 754, 756, 761, 786, 787, 788, 789, 829, and 841 each coordinate ATP. Residues Gln-829, Glu-841, and Asn-843 each contribute to the Mg(2+) site. Residues Gln-829, Glu-841, and Asn-843 each contribute to the Mn(2+) site. Residues 951 to 1095 (GGLPLSGTVF…QDYAIAREAR (145 aa)) enclose the MGS-like domain. The segment at 951–1096 (GGLPLSGTVF…DYAIAREARR (146 aa)) is allosteric domain.

The protein belongs to the CarB family. As to quaternary structure, composed of two chains; the small (or glutamine) chain promotes the hydrolysis of glutamine to ammonia, which is used by the large (or ammonia) chain to synthesize carbamoyl phosphate. Tetramer of heterodimers (alpha,beta)4. Mg(2+) serves as cofactor. It depends on Mn(2+) as a cofactor.

The catalysed reaction is hydrogencarbonate + L-glutamine + 2 ATP + H2O = carbamoyl phosphate + L-glutamate + 2 ADP + phosphate + 2 H(+). It catalyses the reaction hydrogencarbonate + NH4(+) + 2 ATP = carbamoyl phosphate + 2 ADP + phosphate + 2 H(+). It functions in the pathway amino-acid biosynthesis; L-arginine biosynthesis; carbamoyl phosphate from bicarbonate: step 1/1. It participates in pyrimidine metabolism; UMP biosynthesis via de novo pathway; (S)-dihydroorotate from bicarbonate: step 1/3. In terms of biological role, large subunit of the glutamine-dependent carbamoyl phosphate synthetase (CPSase). CPSase catalyzes the formation of carbamoyl phosphate from the ammonia moiety of glutamine, carbonate, and phosphate donated by ATP, constituting the first step of 2 biosynthetic pathways, one leading to arginine and/or urea and the other to pyrimidine nucleotides. The large subunit (synthetase) binds the substrates ammonia (free or transferred from glutamine from the small subunit), hydrogencarbonate and ATP and carries out an ATP-coupled ligase reaction, activating hydrogencarbonate by forming carboxy phosphate which reacts with ammonia to form carbamoyl phosphate. The protein is Carbamoyl phosphate synthase large chain of Clavibacter michiganensis subsp. michiganensis (strain NCPPB 382).